Here is a 325-residue protein sequence, read N- to C-terminus: MKNFSLWCDFIENSFLDNEFLNLLSHGINGATSNPAIFKNAILNSPIYKDKILKLKEKKTKDIYEELAISDIQKAADKLAPLFYQKNDGFISIEIDPRLHDNTTLSLGEAKRLYSAIGKENIMIKIPATKASYEVMYELMKNGISVNATLIFSLEQSQKCFEALNAGLVEFRKNNIALKEQNTRTPQAVISIFVSRFDRLLNPKAKEQNRIGILNANLAYNNIYSKNEPNIRALFASTGVKGDDLPKDYYIKELLFENSVNTAPLDAIEAFKGKMHFKKPLMNFEIYTELNQIISQSEREKACNDLLSDGLEQFCIAFEDILKAL.

Lys-125 acts as the Schiff-base intermediate with substrate in catalysis.

The protein belongs to the transaldolase family. Type 2 subfamily.

It is found in the cytoplasm. It catalyses the reaction D-sedoheptulose 7-phosphate + D-glyceraldehyde 3-phosphate = D-erythrose 4-phosphate + beta-D-fructose 6-phosphate. The protein operates within carbohydrate degradation; pentose phosphate pathway; D-glyceraldehyde 3-phosphate and beta-D-fructose 6-phosphate from D-ribose 5-phosphate and D-xylulose 5-phosphate (non-oxidative stage): step 2/3. Its function is as follows. Transaldolase is important for the balance of metabolites in the pentose-phosphate pathway. This Campylobacter jejuni subsp. jejuni serotype O:2 (strain ATCC 700819 / NCTC 11168) protein is Transaldolase (tal).